We begin with the raw amino-acid sequence, 363 residues long: UDP-N-acetylglucosamine--N-acetylmuramyl-(pentapeptide) pyrophosphoryl-undecaprenol N-acetylglucosamine transferase (363 aa).

Residues Thr13 to Gly15, Asn125, Arg166, Ser195, Ile249, Ala268 to Glu273, and Gln294 each bind UDP-N-acetyl-alpha-D-glucosamine.

Belongs to the glycosyltransferase 28 family. MurG subfamily.

The protein localises to the cell inner membrane. The enzyme catalyses di-trans,octa-cis-undecaprenyl diphospho-N-acetyl-alpha-D-muramoyl-L-alanyl-D-glutamyl-meso-2,6-diaminopimeloyl-D-alanyl-D-alanine + UDP-N-acetyl-alpha-D-glucosamine = di-trans,octa-cis-undecaprenyl diphospho-[N-acetyl-alpha-D-glucosaminyl-(1-&gt;4)]-N-acetyl-alpha-D-muramoyl-L-alanyl-D-glutamyl-meso-2,6-diaminopimeloyl-D-alanyl-D-alanine + UDP + H(+). Its pathway is cell wall biogenesis; peptidoglycan biosynthesis. Cell wall formation. Catalyzes the transfer of a GlcNAc subunit on undecaprenyl-pyrophosphoryl-MurNAc-pentapeptide (lipid intermediate I) to form undecaprenyl-pyrophosphoryl-MurNAc-(pentapeptide)GlcNAc (lipid intermediate II). The sequence is that of UDP-N-acetylglucosamine--N-acetylmuramyl-(pentapeptide) pyrophosphoryl-undecaprenol N-acetylglucosamine transferase from Cellvibrio japonicus (strain Ueda107) (Pseudomonas fluorescens subsp. cellulosa).